A 630-amino-acid polypeptide reads, in one-letter code: tRNA uridine 5-carboxymethylaminomethyl modification enzyme MnmG (630 aa).

FAD is bound at residue 13-18 (GGGHAG). 273–287 (GPRYCPSIEDKIHRF) is an NAD(+) binding site.

Belongs to the MnmG family. Homodimer. Heterotetramer of two MnmE and two MnmG subunits. It depends on FAD as a cofactor.

The protein resides in the cytoplasm. NAD-binding protein involved in the addition of a carboxymethylaminomethyl (cmnm) group at the wobble position (U34) of certain tRNAs, forming tRNA-cmnm(5)s(2)U34. The sequence is that of tRNA uridine 5-carboxymethylaminomethyl modification enzyme MnmG from Pseudomonas putida (strain GB-1).